The chain runs to 76 residues: Large ribosomal subunit protein eL29 (76 aa).

The segment covering 1 to 29 (MAKSKNHTNHNQNKKAHRNGIKRPLRKRH) has biased composition (basic residues). 2 disordered regions span residues 1–33 (MAKSKNHTNHNQNKKAHRNGIKRPLRKRHESTL) and 47–76 (RKGNLSREESVKRYNERIASQKGKPKPVTL). S31 is subject to Phosphoserine. The span at 51-62 (LSREESVKRYNE) shows a compositional bias: basic and acidic residues.

It belongs to the eukaryotic ribosomal protein eL29 family.

This is Large ribosomal subunit protein eL29 (RpL29) from Drosophila melanogaster (Fruit fly).